Consider the following 290-residue polypeptide: S-adenosylmethionine-dependent nucleotide dehydratase (290 aa).

The region spanning 6-226 is the Radical SAM core domain; sequence SGNNIIPSVN…VNRHSKNKFL (221 aa). Residues Cys-22, Cys-26, and Cys-29 each contribute to the [4Fe-4S] cluster site.

The protein belongs to the radical SAM superfamily. Viperin family. It depends on [4Fe-4S] cluster as a cofactor.

It catalyses the reaction UTP + AH2 + S-adenosyl-L-methionine = 3'-deoxy-3',4'-didehydro-UTP + 5'-deoxyadenosine + L-methionine + A + H2O + H(+). Expression of pVip47 in E.coli (strain MG1655) confers resistance to phage P1; has no effect against T7. Catalyzes the conversion of uridine triphosphate (UTP) to 3'-deoxy-3',4'-didehydro-UTP (ddhUTP), probably via a SAM-dependent radical mechanism. The modified nucleotide represses transcription from T7 RNA polymerase-directed genes (possibly by acting as chain terminators), strongly suggesting these nucleotides block viral polymerase transcription. How this protein allows bacteria to resist viruses that do not encode their own RNA polymerase (such as lambda, P1) is unknown. The protein is S-adenosylmethionine-dependent nucleotide dehydratase of Flammeovirga pacifica.